We begin with the raw amino-acid sequence, 211 residues long: Redox-sensing transcriptional repressor Rex (211 aa).

Positions 18–57 (LYYRFLKNLHASGKQRVSSAELSEAVKVDSATIRRDFSYF) form a DNA-binding region, H-T-H motif. Position 92-97 (92-97 (GVGNLG)) interacts with NAD(+).

Belongs to the transcriptional regulatory Rex family. As to quaternary structure, homodimer.

It is found in the cytoplasm. Functionally, modulates transcription in response to changes in cellular NADH/NAD(+) redox state. The chain is Redox-sensing transcriptional repressor Rex from Anoxybacillus flavithermus (strain DSM 21510 / WK1).